The primary structure comprises 445 residues: Xylose isomerase (445 aa).

Residues H107 and D110 contribute to the active site. 7 residues coordinate Mg(2+): E238, E274, H277, D302, D313, D315, and D345.

It belongs to the xylose isomerase family. In terms of assembly, homotetramer. Mg(2+) is required as a cofactor.

The protein resides in the cytoplasm. The enzyme catalyses alpha-D-xylose = alpha-D-xylulofuranose. The polypeptide is Xylose isomerase (xylA) (Bacillus subtilis (strain 168)).